The primary structure comprises 462 residues: MTVEGGVQYSRIAEIKGPLVIVDGVENAAFDELVEIETNEGGRRLGKVLEIGNGKAIVQVFEGTTGLSVAGTNARFVGKVMEMPVSREVLGRIFDGLGRPKDKLPDPIADKFIDINGEAMNPEQREYPKDFIQTGVSAIDGIMTLVRGQKLPIFSGSGMSHNILAAQIARQASVVGTGDDFAVVFAAIGVQYSEAEYFRRSLEESGALKRSVLFLNLANDPAIERIITPRVALTVAEYLAFDLGMHVLVILTDMTNYAEALREISAAREEVPGRKGYPGYLYTDLSTIYERAGRLVGRKGSVTQVPILTMPSDDITHPIPDLTGYITEGQVVLGRDLFRQGVYPPVNILMSLSRLMKDGIGEGRTREDHQEISNQNYDAYSRAQEVRALAGIVGKAGLTDIDLRYMGVGDSLEQRLLTQATDENRTIEETLGIMWDTVSGLPKNELTKVKDKYVEKFYKGSA.

Belongs to the ATPase alpha/beta chains family. Has multiple subunits with at least A(3), B(3), C, D, E, F, H, I and proteolipid K(x).

It is found in the cell membrane. Functionally, component of the A-type ATP synthase that produces ATP from ADP in the presence of a proton gradient across the membrane. The B chain is a regulatory subunit. In Cenarchaeum symbiosum (strain A), this protein is A-type ATP synthase subunit B.